The primary structure comprises 108 residues: uncharacterized protein (108 aa).

Positions methionine 1–leucine 23 are disordered.

This is an uncharacterized protein from Ureaplasma parvum serovar 3 (strain ATCC 700970).